The sequence spans 368 residues: MSHNTFGHLFRVTTFGESHGVAIGCVVDGCPPMLPLTAEEIQRDLDRRRPGQSRFTTQRQEPDAVKILSGVMPHPGTGEQVTTGAPIGLLIENTDQRSKDYSDIKDKFRPGHADFTYEAKYGIRDYRGGGRSSARETAMRVAAGAIARKVVSGMRVRGALVQMGPHKIDRDKWDWDEIARNPFFCPDKDKAAFFESYLDGIRKSGSSIGAVIEVVADGVPAGLGAPIYAKLDGDLAAALMSINAVKGVEIGAGFGAAALTGEENADEMRSSSSDMGNHGPVFTSNHAGGILGGISTGQPIVARFAVKPTSSILSPRKTVDRNGAETDIFTRGRHDPCVGIRAVPVGEAMVACVLADHVLRHRGQVGAS.

Residues Arg-48 and Arg-54 each coordinate NADP(+). FMN contacts are provided by residues 131–133, 243–244, Gly-292, 307–311, and Arg-333; these read RSS, NA, and KPTSS.

This sequence belongs to the chorismate synthase family. As to quaternary structure, homotetramer. It depends on FMNH2 as a cofactor.

It catalyses the reaction 5-O-(1-carboxyvinyl)-3-phosphoshikimate = chorismate + phosphate. It functions in the pathway metabolic intermediate biosynthesis; chorismate biosynthesis; chorismate from D-erythrose 4-phosphate and phosphoenolpyruvate: step 7/7. Catalyzes the anti-1,4-elimination of the C-3 phosphate and the C-6 proR hydrogen from 5-enolpyruvylshikimate-3-phosphate (EPSP) to yield chorismate, which is the branch point compound that serves as the starting substrate for the three terminal pathways of aromatic amino acid biosynthesis. This reaction introduces a second double bond into the aromatic ring system. The chain is Chorismate synthase from Nitrobacter winogradskyi (strain ATCC 25391 / DSM 10237 / CIP 104748 / NCIMB 11846 / Nb-255).